The following is a 66-amino-acid chain: Large ribosomal subunit protein bL33c (66 aa).

Belongs to the bacterial ribosomal protein bL33 family.

The protein resides in the plastid. Its subcellular location is the chloroplast. In Oenothera argillicola (Appalachian evening primrose), this protein is Large ribosomal subunit protein bL33c.